Consider the following 1129-residue polypeptide: PAN2-PAN3 deadenylation complex catalytic subunit PAN2 (1129 aa).

5 WD repeats span residues 20–60 (PPAV…YTSY), 104–146 (PDFK…DTLP), 148–183 (DAQY…VIKV), 186–226 (GHTG…FSLK), and 280–319 (LYDS…HFPE). Residues 320-457 (YSNPTEFADH…DLHLDDVTRK (138 aa)) are linker. The interval 396-427 (RTKRRNQIEVTRQTDRSSDSLTPPKFLSEKSR) is disordered. The region spanning 458–830 (DVPAMYGNVE…LPSVLTFQTK (373 aa)) is the USP domain. Residues 880-1052 (VAIDAEFIRL…IEDATTALKL (173 aa)) enclose the Exonuclease domain. Positions 883, 885, 992, and 1045 each coordinate a divalent metal cation. The disordered stretch occupies residues 1083–1129 (APGSGNRNSMPAGMTATGAGRDTPEPMTTPKKGGAFGGVGFRSPMRR).

It belongs to the peptidase C19 family. PAN2 subfamily. As to quaternary structure, forms a heterotrimer with an asymmetric homodimer of the regulatory subunit PAN3 to form the poly(A)-nuclease (PAN) deadenylation complex. The cofactor is a divalent metal cation.

It localises to the cytoplasm. The catalysed reaction is Exonucleolytic cleavage of poly(A) to 5'-AMP.. With respect to regulation, positively regulated by the regulatory subunit PAN3. In terms of biological role, catalytic subunit of the poly(A)-nuclease (PAN) deadenylation complex, one of two cytoplasmic mRNA deadenylases involved in mRNA turnover. PAN specifically shortens poly(A) tails of RNA and the activity is stimulated by poly(A)-binding protein PAB1. PAN deadenylation is followed by rapid degradation of the shortened mRNA tails by the CCR4-NOT complex. Deadenylated mRNAs are then degraded by two alternative mechanisms, namely exosome-mediated 3'-5' exonucleolytic degradation, or deadenylation-dependent mRNA decaping and subsequent 5'-3' exonucleolytic degradation by XRN1. May also be involved in post-transcriptional maturation of mRNA poly(A) tails. The chain is PAN2-PAN3 deadenylation complex catalytic subunit PAN2 from Phaeosphaeria nodorum (strain SN15 / ATCC MYA-4574 / FGSC 10173) (Glume blotch fungus).